The chain runs to 393 residues: Putative zinc metalloprotease Rip3 (393 aa).

2 consecutive transmembrane segments (helical) span residues 10-30 and 45-65; these read IAGFVVNVHWSVLVILWLFTW and AVVYWLLGAGGAVMLLASLLA. H66 contacts Zn(2+). E67 is a catalytic residue. Residue H70 coordinates Zn(2+). The next 4 membrane-spanning stretches (helical) occupy residues 77–97, 108–128, 136–156, and 207–227; these read AGVSVESVTLWLFGGVTALGG, IAFAGPATSLALSATFGALAI, PAIVISVAWWLATVNLLLGLF, and FVAGGLVGGVWLAFIGWFIFA. CBS domains are found at residues 251 to 308 and 315 to 376; these read MTAQ…RRST and ALPL…AQPE.

This sequence belongs to the peptidase M50B family. It depends on Zn(2+) as a cofactor.

Its subcellular location is the cell membrane. The polypeptide is Putative zinc metalloprotease Rip3 (rip3) (Mycobacterium tuberculosis (strain ATCC 35801 / TMC 107 / Erdman)).